Here is a 37-residue protein sequence, read N- to C-terminus: uncharacterized protein (37 aa).

The protein belongs to the poxviridae A56.5 protein family.

This is an uncharacterized protein from Vaccinia virus (strain Western Reserve) (VACV).